The chain runs to 749 residues: Protein O-mannosyl-transferase 2 (749 aa).

A disordered region spans residues 1 to 30; it reads MAASVVKTPKCPRRGSAKEQQSKASPKSNN. A helical membrane pass occupies residues 34 to 54; sequence NWHWWILLASVFLITFATRFY. N-linked (GlcNAc...) asparagine glycosylation is found at asparagine 78, asparagine 104, and asparagine 117. The next 5 helical transmembrane spans lie at 126–146, 173–193, 204–224, 226–246, and 266–286; these read YFCT…VYDL, ILLD…MVKI, SVRW…TISV, FVGL…LWLI, and IALI…HLSV. Residues asparagine 288 and asparagine 312 are each glycosylated (N-linked (GlcNAc...) asparagine). MIR domains lie at 316–372, 382–438, and 443–499; these read PRDV…IKPH, LQLL…VLIV, and NETV…VEDN. Asparagine 443 is a glycosylation site (N-linked (GlcNAc...) asparagine). Transmembrane regions (helical) follow at residues 572-592, 645-665, 669-689, and 703-723; these read IWWS…GNAI, LGAA…FWAM, LYFH…GVMF, and VLLG…SPLA. N-linked (GlcNAc...) asparagine glycosylation is present at asparagine 735.

It belongs to the glycosyltransferase 39 family. In terms of assembly, interacts with Rt/POMT1.

It localises to the endoplasmic reticulum membrane. It carries out the reaction a di-trans,poly-cis-dolichyl beta-D-mannosyl phosphate + L-seryl-[protein] = 3-O-(alpha-D-mannosyl)-L-seryl-[protein] + a di-trans,poly-cis-dolichyl phosphate + H(+). The enzyme catalyses a di-trans,poly-cis-dolichyl beta-D-mannosyl phosphate + L-threonyl-[protein] = 3-O-(alpha-D-mannosyl)-L-threonyl-[protein] + a di-trans,poly-cis-dolichyl phosphate + H(+). It participates in protein modification; protein glycosylation. In terms of biological role, rt/POMT1 and tw/POMT2 function as a protein O-mannosyltransferase in association with each other to generate and maintain normal muscle development. The chain is Protein O-mannosyl-transferase 2 from Drosophila pseudoobscura pseudoobscura (Fruit fly).